We begin with the raw amino-acid sequence, 846 residues long: Integrin beta-PS (846 aa).

The N-terminal stretch at 1-28 is a signal peptide; sequence MILERNRRCQLALLMIAILAAIAGQTDA. Topologically, residues 29-777 are extracellular; it reads QKAAKLTAVS…NKECPAKVFM (749 aa). Cysteine 46 and cysteine 55 are oxidised to a cystine. N-linked (GlcNAc...) asparagine glycosylation is present at asparagine 72. The 234-residue stretch at 186–419 folds into the VWFA domain; sequence DLYYLMDLSK…ELVKEEYRKI (234 aa). Cysteine 249 and cysteine 252 are disulfide-bonded. N-linked (GlcNAc...) asparagine glycans are attached at residues asparagine 266 and asparagine 277. The cysteines at positions 300 and 341 are disulfide-linked. N-linked (GlcNAc...) asparagine glycosylation is found at asparagine 403 and asparagine 428. 21 cysteine pairs are disulfide-bonded: cysteine 441-cysteine 453, cysteine 473-cysteine 741, cysteine 507-cysteine 530, cysteine 522-cysteine 533, cysteine 535-cysteine 544, cysteine 546-cysteine 579, cysteine 561-cysteine 577, cysteine 571-cysteine 582, cysteine 584-cysteine 599, cysteine 601-cysteine 624, cysteine 606-cysteine 622, cysteine 614-cysteine 627, cysteine 629-cysteine 638, cysteine 640-cysteine 664, cysteine 647-cysteine 662, cysteine 656-cysteine 667, cysteine 669-cysteine 682, cysteine 685-cysteine 688, cysteine 692-cysteine 701, cysteine 698-cysteine 771, and cysteine 719-cysteine 749. 4 I-EGF domains span residues 507 to 545, 546 to 600, 601 to 639, and 640 to 683; these read CENPGSIGYQVQANSCSGHGTSMCGICNCDDSYFGNKCE, CSAT…KHCE, CDNFSCERNRNQLCSGPDHGTCECGRCKCKPGWTGSNCG, and CQES…RHCE. N-linked (GlcNAc...) asparagine glycosylation occurs at asparagine 557. Residue asparagine 603 is glycosylated (N-linked (GlcNAc...) asparagine). N-linked (GlcNAc...) asparagine glycosylation occurs at asparagine 644. A glycan (N-linked (GlcNAc...) asparagine) is linked at asparagine 718. The helical transmembrane segment at 778-798 threads the bilayer; that stretch reads LGIVMGVIAAIVLVGLAILLL. Residues 799–846 are Cytoplasmic-facing; it reads WKLLTTIHDRREFARFEKERMNAKWDTGENPIYKQATSTFKNPMYAGK. A phosphotyrosine mark is found at tyrosine 831 and tyrosine 843.

The protein belongs to the integrin beta chain family. Heterodimer of an alpha and a beta subunit. Beta-PS associates with either alpha-PS1, alpha-PS2, alpha-PS3, alpha-PS4 or alpha-PS5. In terms of tissue distribution, in ovaries, strongly expressed in follicle cells. In oocytes, expressed in the forming dorsal appendages (at protein level). Expressed in the embryonic dorsal cuticle, the larval eye and the wing imaginal disk. In testes, detected at the interface between somatic hub cells and cyst stem cells.

Its subcellular location is the cell membrane. The protein localises to the apical cell membrane. The protein resides in the lateral cell membrane. It is found in the basal cell membrane. In terms of biological role, integrin alpha-PS1/beta-PS is a receptor for laminin. Integrin alpha-PS2/beta-PS is a receptor for Tig, wb and Ten-m. Contributes to endodermal integrity and adhesion between the midgut epithelium and the surrounding visceral muscle. Essential for migration of the primordial midgut cells and for maintaining, but not establishing, cell polarity in the midgut epithelium. The two beta subunits mediate midgut migration by distinct mechanisms: beta-PS requires rhea/talin and Itgbn does not. Required for rhea/talin correct cellular localization in the midgut. Required for many embryonic (dorsal closure and somatic muscle attachments) and postembryonic developmental processes (attachment between cell layers of imaginal disks, organization of ommatidial arrays and flight muscle development). Involved in the function and/or development of the olfactory system. In the testes, essential for shv-dependent maintenance of somatic hub cells and their localization to the apical tip. Plays a role in timely border cell migration during oogenesis. This is Integrin beta-PS (mys) from Drosophila melanogaster (Fruit fly).